A 226-amino-acid chain; its full sequence is AN1-type zinc finger protein 3 homolog (226 aa).

The A20-type zinc finger occupies 12–44; it reads PSLPPRCPCGFWGSSKTMNLCSKCFADFQKKQP. Zn(2+) is bound by residues C18, C20, C32, and C35. The interval 42–149 is disordered; the sequence is KQPDEDTAPS…DRPDNSSRSK (108 aa). 3 stretches are compositionally biased toward polar residues: residues 49 to 59, 67 to 92, and 105 to 114; these read APSTSSSQSDL, DNGNTSIPTPTVNPTQQLPTELNVDS, and AHVSLTTPSK. The span at 134 to 146 shows a compositional bias: basic and acidic residues; that stretch reads RLLDSGDRPDNSS. The AN1-type zinc finger occupies 150–199; that stretch reads QKSRRRCFRCQIKLELVQQELGSCRCGYVFCMLHRLPEQHDCTFDHMGRG. Positions 156, 159, 173, 175, 180, 183, 189, and 191 each coordinate Zn(2+).

This chain is AN1-type zinc finger protein 3 homolog (zfand3), found in Xenopus laevis (African clawed frog).